A 71-amino-acid chain; its full sequence is 7.9 kDa protein (71 aa).

The chain is 7.9 kDa protein from Pseudomonas aeruginosa (Bacteriophage Pf3).